The primary structure comprises 218 residues: Sodium channel regulatory subunit beta-1 (218 aa).

The signal sequence occupies residues 1 to 18 (MGTLLALVVGAVLVSSAW). At 19–157 (GGCVEVDSET…DKANRDMASI (139 aa)) the chain is on the extracellular side. Cystine bridges form between Cys-21–Cys-43 and Cys-40–Cys-121. The region spanning 22–150 (VEVDSETEAV…KIHLEVVDKA (129 aa)) is the Ig-like C2-type domain. N-linked (GlcNAc...) asparagine glycosylation is found at Asn-93, Asn-110, Asn-114, and Asn-135. A helical membrane pass occupies residues 158–179 (VSEIMMYVLIVVLTIWLVAEMV). Topologically, residues 180–218 (YCYKKIAAATEAAAQENASEYLAITSESKENCTGVQVAE) are cytoplasmic.

The protein belongs to the sodium channel auxiliary subunit SCN1B (TC 8.A.17) family. A voltage-gated sodium (Nav) channel consists of an ion-conducting pore-forming alpha subunit functional on its own that is regulated by one or more beta subunits. Interacts with SCN1A; regulatory subunit of SCN1A/Nav1.1. Interacts with SCN3A; regulatory subunit of SCN3A/Nav1.3. Interacts with SCN4A; regulatory subunit of SCN4A/Nav1.4. Interacts with SCN5A; regulatory subunit of SCN5A/Nav1.5. Interacts with SCN8A; regulatory subunit of SCN8A/Nav1.6. Interacts with SCN9A; regulatory subunit of SCN9A/Nav1.7. Interacts with SCN10A; regulatory subunit of SCN10A/Nav1.8. Interacts with NFASC. Interacts with TMEM65. Detected in brain (at protein level). Expressed in brain, heart, skeletal muscle and spinal cord.

The protein localises to the cell membrane. The protein resides in the perikaryon. Its subcellular location is the cell projection. It localises to the axon. Functionally, regulatory subunit of multiple voltage-gated sodium (Nav) channels directly mediating the depolarization of excitable membranes. Navs, also called VGSCs (voltage-gated sodium channels) or VDSCs (voltage-dependent sodium channels), operate by switching between closed and open conformations depending on the voltage difference across the membrane. In the open conformation they allow Na(+) ions to selectively pass through the pore, along their electrochemical gradient. The influx of Na+ ions provokes membrane depolarization, initiating the propagation of electrical signals throughout cells and tissues. The accessory beta subunits participate in localization and functional modulation of the Nav channels. Modulates the activity of SCN1A/Nav1.1, SCN2A/Nav1.2, SCN3A/Nav1.3, SCN4A/Nav1.4, SCN5A/Nav1.5, SCN8A/Nav1.6, SCN9A/Nav1.7 and SCN10A/Nav1.8. This is Sodium channel regulatory subunit beta-1 from Rattus norvegicus (Rat).